A 25-amino-acid chain; its full sequence is Insulin mimetic protein (25 aa).

Residues Thr-1 to Lys-25 are disordered.

In terms of processing, glycosylated. As to expression, expressed in seed.

The sequence is that of Insulin mimetic protein from Cnidoscolus quercifolius.